The chain runs to 691 residues: Beta-galactosidase III (691 aa).

Substrate-binding residues include Arg-121 and Asn-159. Residue Glu-160 is the Proton donor of the active site. Glu-318 serves as the catalytic Nucleophile. Substrate contacts are provided by residues Trp-326 and 366–369; that span reads EKWH.

It belongs to the glycosyl hydrolase 42 family.

The enzyme catalyses Hydrolysis of terminal non-reducing beta-D-galactose residues in beta-D-galactosides.. In terms of biological role, specific for beta-D-anomer-linked galactoside substrates. Hydrolyzes o-nitrophenyl-beta-D-galactopyranoside (ONPG), chromogen 5-bromo-4-chloro-3-indolyl-beta-D-galactopyranoside (X-gal) and to a lesser extent lactose. Hydrolyzes p-nitrophenyl-beta-D-galacturonide very slightly. Does not hydrolyze maltose, sucrose, raffinose or melibiose. Has some transgalactosylation activity yielding galacto-oligosaccharides (GaOS), including O-beta-D-galactopyranosyl-(1,3)-O-beta-D-galactopyranosyl-(1-4)-D-glucopyranose. This chain is Beta-galactosidase III, found in Bifidobacterium longum subsp. infantis.